A 655-amino-acid chain; its full sequence is MAEAPQVVEIDPDFEPLPRPRSCTWPLPRPEFSQSNSATSSPAPSGSAAANPDAAAGLPSASAAAVSADFMSNLSLLEESEDFPQAPGSVAAAVAAAAAAAATGGLCGDFQGPEAGCLHPAPPQPPPPGPLSQHPPVPPAAAGPLAGQPRKSSSSRRNAWGNLSYADLITKAIESSAEKRLTLSQIYEWMVKSVPYFKDKGDSNSSAGWKNSIRHNLSLHSKFIRVQNEGTGKSSWWMLNPEGGKSGKSPRRRAASMDNNSKFAKSRSRAAKKKASLQSGQEGAGDSPGSQFSKWPASPGSHSNDDFDNWSTFRPRTSSNASTISGRLSPIMTEQDDLGEGDVHSMVYPPSAAKMASTLPSLSEISNPENMENLLDNLNLLSSPTSLTVSTQSSPGTMMQQTPCYSFAPPNTSLNSPSPNYQKYTYGQSSMSPLPQMPIQTLQDNKSSYGGMSQYNCAPGLLKELLTSDSPPHNDIMTPVDPGVAQPNSRVLGQNVMMGPNSVMSTYGSQASHNKMMNPSSHTHPGHAQQTSAVNGRPLPHTVSTMPHTSGMNRLTQVKTPVQVPLPHPMQMSALGGYSSVSSCNGYGRMGLLHQEKLPSDLDGMFIERLDCDMESIIRNDLMDGDTLDFNFDNVLPNQSFPHSVKTTTHSWVSG.

Disordered stretches follow at residues 1-63 (MAEA…SASA) and 116-158 (GCLH…SRRN). The residue at position 24 (Thr-24) is a Phosphothreonine; by PKB/AKT1 or PKB/AKT2 and SGK1. Positions 33–63 (SQSNSATSSPAPSGSAAANPDAAAGLPSASA) are enriched in low complexity. Over residues 120 to 141 (PAPPQPPPPGPLSQHPPVPPAA) the composition is skewed to pro residues. Positions 159–235 (AWGNLSYADL…VQNEGTGKSS (77 aa)) form a DNA-binding region, fork-head. DNA-binding stretches follow at residues 211-218 (NSIRHNLS) and 234-237 (SSWW). Ser-212, Ser-218, Ser-234, and Ser-235 each carry phosphoserine; by STK4/MST1. The interval 234–344 (SSWWMLNPEG…QDDLGEGDVH (111 aa)) is disordered. 2 positions are modified to N6-acetyllysine: Lys-245 and Lys-248. A Phosphoserine; by CDK1 modification is found at Ser-249. Omega-N-methylarginine; by PRMT1 is present on residues Arg-251 and Arg-253. The Nuclear localization signal signature appears at 251-253 (RRR). Ser-256 is modified (phosphoserine; by PKB/AKT1 and SGK1). Residues Lys-262, Lys-265, and Lys-274 each carry the N6-acetyllysine modification. Positions 264-275 (AKSRSRAAKKKA) are enriched in basic residues. The interval 283–563 (GAGDSPGSQF…RLTQVKTPVQ (281 aa)) is sufficient for interaction with NLK. Phosphoserine occurs at positions 287 and 298. Residues 309 to 326 (NWSTFRPRTSSNASTISG) are compositionally biased toward polar residues. Ser-319 is modified (phosphoserine; by PKB/AKT1). At Ser-322 the chain carries Phosphoserine; by CK1 and SGK1. Residue Ser-325 is modified to Phosphoserine; by CK1. Ser-329 is modified (phosphoserine; by DYRK1A). The residue at position 333 (Thr-333) is a Phosphothreonine. The tract at residues 363–459 (SEISNPENME…GGMSQYNCAP (97 aa)) is required for interaction with RUNX2. Lys-423 carries the post-translational modification N6-acetyllysine. The Required for interaction with SIRT1 motif lies at 462 to 466 (LKELL). Residues 507 to 534 (YGSQASHNKMMNPSSHTHPGHAQQTSAV) are compositionally biased toward polar residues. Residues 507–537 (YGSQASHNKMMNPSSHTHPGHAQQTSAVNGR) are disordered.

As to quaternary structure, interacts with LRPPRC. Interacts with RUNX2; the interaction inhibits RUNX2 transcriptional activity and mediates the IGF1/insulin-dependent BGLAP expression in osteoblasts Interacts with PPP2R1A; the interaction regulates the dephosphorylation of FOXO1 at Thr-24 and Ser-256 leading to its nuclear import. Interacts (acetylated form) with PPARG. Interacts with XBP1 isoform 2; this interaction is direct and leads to FOXO1 ubiquitination and degradation via the proteasome pathway. Interacts with NLK. Interacts with SIRT1; the interaction results in the deacetylation of FOXO1 leading to activation of FOXO1-mediated transcription of genes involved in DNA repair and stress resistance. Binds to CDK1. Interacts with the 14-3-3 proteins, YWHAG and YWHAZ; the interactions require insulin-stimulated phosphorylation on Thr-24, promote nuclear exit and loss of transcriptional activity. Interacts with SKP2; the interaction ubiquitinates FOXO1 leading to its proteasomal degradation. The interaction requires the presence of KRIT1. Interacts (via the C-terminal half) with ATF4 (via its DNA-binding domain); the interaction occurs in osteoblasts, regulates glucose homeostasis via suppression of beta-cell proliferation and subsequent decrease in insulin production. Interacts with PRMT1; the interaction methylates FOXO1, prevents PKB/AKT1 phosphorylation and retains FOXO1 in the nucleus. Interacts with EP300 and CREBBP; the interactions acetylate FOXO1. Interacts with SIRT2; the interaction is disrupted in response to oxidative stress or serum deprivation, leading to increased level of acetylated FOXO1, which promotes stress-induced autophagy by stimulating E1-like activating enzyme ATG7. Interacts (acetylated form) with ATG7; the interaction is increased in response to oxidative stress or serum deprivation and promotes the autophagic process leading to cell death. Interacts (via the Fork-head domain) with CEBPA; the interaction increases when FOXO1 is deacetylated. Interacts with WDFY2. Forms a complex with WDFY2 and AKT1. Interacts with CRY1. Interacts with PPIA/CYPA; the interaction promotes FOXO1 dephosphorylation, nuclear accumulation and transcriptional activity. Interacts with TOX4; FOXO1 is required for full induction of TOX4-dependent activity and the interaction is inhibited by insulin. Interacts (when phosphorylated on Ser-256) with STUB1/CHIP. In terms of processing, phosphorylation by NLK promotes nuclear export and inhibits the transcriptional activity. In response to growth factors, phosphorylation on Thr-24, Ser-256 and Ser-322 by PKB/AKT1 promotes nuclear export and inactivation of transactivational activity. Phosphorylation on Thr-24 is required for binding 14-3-3 proteins. Phosphorylation of Ser-256 decreases DNA-binding activity and promotes the phosphorylation of Thr-24 and Ser-319, permitting phosphorylation of Ser-322 and Ser-325, probably by CDK1, leading to nuclear exclusion and loss of function. Stress signals, such as response to oxygen or nitric oxide, attenuate the PKB/AKT1-mediated phosphorylation leading to nuclear retention. Phosphorylation of Ser-329 is independent of IGF1 and leads to reduced function. Dephosphorylated on Thr-24 and Ser-256 by PP2A in beta-cells under oxidative stress leading to nuclear retention. Phosphorylation of Ser-249 by CDK1 disrupts binding of 14-3-3 proteins leading to nuclear accumulation and has no effect on DNA-binding nor transcriptional activity. Phosphorylation by STK4/MST1 on Ser-212, upon oxidative stress, inhibits binding to 14-3-3 proteins and nuclear export. PPIA/CYPA promotes its dephosphorylation on Ser-256. Ubiquitinated by SKP2. Ubiquitination leads to proteasomal degradation. Ubiquitinated by STUB1/CHIP; when Ser-256 is phosphorylated. Post-translationally, methylation inhibits AKT1-mediated phosphorylation at Ser-256 and is increased by oxidative stress. In terms of processing, acetylated. Acetylation at Lys-262, Lys-265 and Lys-274 are necessary for autophagic cell death induction. Deacetylated by SIRT2 in response to oxidative stress or serum deprivation, thereby negatively regulating FOXO1-mediated autophagic cell death. Once in the nucleus, acetylated by CREBBP/EP300. Acetylation diminishes the interaction with target DNA and attenuates the transcriptional activity. It increases the phosphorylation at Ser-256. Deacetylation by SIRT1 results in reactivation of the transcriptional activity. Oxidative stress by hydrogen peroxide treatment appears to promote deacetylation and uncoupling of insulin-induced phosphorylation. By contrast, resveratrol acts independently of acetylation. Acetylated at Lys-423, promoting its localization to the nucleus and transcription factor activity. Deacetylation at Lys-423 by SIRT6, promotes its translocation into the cytoplasm, preventing its transcription factor activity. Deacetylation and subsequent inhibition by SIRT6 has different effects depending on cell types: it inhibits gluconeogenesis in hepatocytes, promotes glucose sensing in pancreatic beta-cells and regulates lipid catabolism in brown adipocytes. As to expression, expressed in umbilical endothelial cells (at protein level). Abundantly expressed in skeletal muscle and ovary, with lower expression in the heart, placenta, lung, liver, pancreas, spleen, testis and small intestine. Weakly expressed in the brain, thymus, prostate and mucosal lining of the colon.

The protein resides in the cytoplasm. The protein localises to the nucleus. Functionally, transcription factor that is the main target of insulin signaling and regulates metabolic homeostasis in response to oxidative stress. Binds to the insulin response element (IRE) with consensus sequence 5'-TT[G/A]TTTTG-3' and the related Daf-16 family binding element (DBE) with consensus sequence 5'-TT[G/A]TTTAC-3'. Activity suppressed by insulin. Main regulator of redox balance and osteoblast numbers and controls bone mass. Orchestrates the endocrine function of the skeleton in regulating glucose metabolism. Also acts as a key regulator of chondrogenic commitment of skeletal progenitor cells in response to lipid availability: when lipids levels are low, translocates to the nucleus and promotes expression of SOX9, which induces chondrogenic commitment and suppresses fatty acid oxidation. Acts synergistically with ATF4 to suppress osteocalcin/BGLAP activity, increasing glucose levels and triggering glucose intolerance and insulin insensitivity. Also suppresses the transcriptional activity of RUNX2, an upstream activator of osteocalcin/BGLAP. Acts as an inhibitor of glucose sensing in pancreatic beta cells by acting as a transcription repressor and suppressing expression of PDX1. In hepatocytes, promotes gluconeogenesis by acting together with PPARGC1A and CEBPA to activate the expression of genes such as IGFBP1, G6PC1 and PCK1. Also promotes gluconeogenesis by directly promoting expression of PPARGC1A and G6PC1. Important regulator of cell death acting downstream of CDK1, PKB/AKT1 and STK4/MST1. Promotes neural cell death. Mediates insulin action on adipose tissue. Regulates the expression of adipogenic genes such as PPARG during preadipocyte differentiation and, adipocyte size and adipose tissue-specific gene expression in response to excessive calorie intake. Regulates the transcriptional activity of GADD45A and repair of nitric oxide-damaged DNA in beta-cells. Required for the autophagic cell death induction in response to starvation or oxidative stress in a transcription-independent manner. Mediates the function of MLIP in cardiomyocytes hypertrophy and cardiac remodeling. Positive regulator of apoptosis in cardiac smooth muscle cells as a result of its transcriptional activation of pro-apoptotic genes. Regulates endothelial cell (EC) viability and apoptosis in a PPIA/CYPA-dependent manner via transcription of CCL2 and BCL2L11 which are involved in EC chemotaxis and apoptosis. This is Forkhead box protein O1 from Homo sapiens (Human).